Here is a 72-residue protein sequence, read N- to C-terminus: Large ribosomal subunit protein bL31 (72 aa).

Belongs to the bacterial ribosomal protein bL31 family. Type A subfamily. In terms of assembly, part of the 50S ribosomal subunit.

Binds the 23S rRNA. This is Large ribosomal subunit protein bL31 from Maricaulis maris (strain MCS10) (Caulobacter maris).